A 766-amino-acid chain; its full sequence is 5-methyltetrahydropteroyltriglutamate--homocysteine methyltransferase (766 aa).

Residues 16 to 19 and Lys-124 contribute to the 5-methyltetrahydropteroyltri-L-glutamate site; that span reads RELK. L-homocysteine-binding positions include 445 to 447 and Glu-498; that span reads IGS. Residues 445–447 and Glu-498 contribute to the L-methionine site; that span reads IGS. 5-methyltetrahydropteroyltri-L-glutamate contacts are provided by residues 529 to 530 and Trp-575; that span reads RC. Asp-613 serves as a coordination point for L-homocysteine. Residue Asp-613 coordinates L-methionine. Glu-619 is a binding site for 5-methyltetrahydropteroyltri-L-glutamate. Zn(2+) contacts are provided by His-655, Cys-657, and Glu-679. His-708 serves as the catalytic Proton donor. Cys-740 is a Zn(2+) binding site.

This sequence belongs to the vitamin-B12 independent methionine synthase family. Zn(2+) serves as cofactor.

The catalysed reaction is 5-methyltetrahydropteroyltri-L-glutamate + L-homocysteine = tetrahydropteroyltri-L-glutamate + L-methionine. It functions in the pathway amino-acid biosynthesis; L-methionine biosynthesis via de novo pathway; L-methionine from L-homocysteine (MetE route): step 1/1. In terms of biological role, catalyzes the transfer of a methyl group from 5-methyltetrahydrofolate to homocysteine resulting in methionine formation. The sequence is that of 5-methyltetrahydropteroyltriglutamate--homocysteine methyltransferase from Pseudomonas syringae pv. tomato (strain ATCC BAA-871 / DC3000).